The sequence spans 441 residues: Arginine biosynthesis bifunctional protein ArgJ, mitochondrial (441 aa).

A mitochondrion-targeting transit peptide spans 1-8 (MRISSTLL). Positions 177, 204, 215, 301, 436, and 441 each coordinate substrate. Thr215 serves as the catalytic Nucleophile.

Belongs to the ArgJ family. Heterodimer of an alpha and a beta chain. Post-translationally, the alpha and beta chains are autoproteolytically processed from a single precursor protein within the mitochondrion.

It localises to the mitochondrion matrix. The catalysed reaction is N(2)-acetyl-L-ornithine + L-glutamate = N-acetyl-L-glutamate + L-ornithine. The enzyme catalyses L-glutamate + acetyl-CoA = N-acetyl-L-glutamate + CoA + H(+). It participates in amino-acid biosynthesis; L-arginine biosynthesis; L-ornithine and N-acetyl-L-glutamate from L-glutamate and N(2)-acetyl-L-ornithine (cyclic): step 1/1. It functions in the pathway amino-acid biosynthesis; L-arginine biosynthesis; N(2)-acetyl-L-ornithine from L-glutamate: step 1/4. Functionally, catalyzes two activities which are involved in the cyclic version of arginine biosynthesis: the synthesis of acetylglutamate from glutamate and acetyl-CoA, and of ornithine by transacetylation between acetylornithine and glutamate. This Saccharomyces cerevisiae (strain Lalvin EC1118 / Prise de mousse) (Baker's yeast) protein is Arginine biosynthesis bifunctional protein ArgJ, mitochondrial.